Consider the following 27-residue polypeptide: uncharacterized protein (27 aa).

It is found in the plastid. Its subcellular location is the chloroplast. This is an uncharacterized protein from Trieres chinensis (Marine centric diatom).